The sequence spans 763 residues: Hormone-sensitive lipase (763 aa).

The Involved in the stabilization of the negatively charged intermediate by the formation of the oxyanion hole motif lies at 350–352; it reads HGG. The active site involves Ser-424. Residue Ser-552 is modified to Phosphoserine. At Ser-554 the chain carries Phosphoserine; by AMPK. Phosphoserine occurs at positions 595, 627, and 649. Residues 616–627 are compositionally biased toward basic and acidic residues; it reads AREEAEAKEGLS. Positions 616-652 are disordered; sequence AREEAEAKEGLSAKDGSSRVSNAFPEGFHPRRTSQGA. Active-site residues include Asp-692 and His-722.

It belongs to the 'GDXG' lipolytic enzyme family. Monomer and homodimer. Interacts with CAVIN1 in the adipocyte cytoplasm. Interacts with PLIN5. Post-translationally, phosphorylation by AMPK reduces its translocation towards the lipid droplets.

The protein resides in the cell membrane. It localises to the membrane. Its subcellular location is the caveola. The protein localises to the cytoplasm. It is found in the cytosol. The protein resides in the lipid droplet. It catalyses the reaction a diacylglycerol + H2O = a monoacylglycerol + a fatty acid + H(+). It carries out the reaction a triacylglycerol + H2O = a diacylglycerol + a fatty acid + H(+). The catalysed reaction is a monoacylglycerol + H2O = glycerol + a fatty acid + H(+). The enzyme catalyses Hydrolyzes glycerol monoesters of long-chain fatty acids.. It catalyses the reaction 1,2-di-(9Z-octadecenoyl)-glycerol + (9Z)-octadecenoate + H(+) = 1,2,3-tri-(9Z-octadecenoyl)-glycerol + H2O. It carries out the reaction 2,3-di-(9Z)-octadecenoyl-sn-glycerol + H2O = 2-(9Z-octadecenoyl)-glycerol + (9Z)-octadecenoate + H(+). The catalysed reaction is cholesteryl (9Z-octadecenoate) + H2O = cholesterol + (9Z)-octadecenoate + H(+). The enzyme catalyses 1,2,3-tri-(9Z-octadecenoyl)-glycerol + H2O = di-(9Z)-octadecenoylglycerol + (9Z)-octadecenoate + H(+). It catalyses the reaction all-trans-retinyl hexadecanoate + H2O = all-trans-retinol + hexadecanoate + H(+). It carries out the reaction 1,2-di-(9Z-octadecenoyl)-glycerol + H2O = (9Z-octadecenoyl)-glycerol + (9Z)-octadecenoate + H(+). The catalysed reaction is 2-(5Z,8Z,11Z,14Z-eicosatetraenoyl)-glycerol + H2O = glycerol + (5Z,8Z,11Z,14Z)-eicosatetraenoate + H(+). The enzyme catalyses 1-(9Z-octadecenoyl)-glycerol + H2O = glycerol + (9Z)-octadecenoate + H(+). It catalyses the reaction 2-(9Z-octadecenoyl)-glycerol + H2O = glycerol + (9Z)-octadecenoate + H(+). It carries out the reaction 1-O-hexadecyl-2-acetyl-sn-glycerol + H2O = 1-O-hexadecyl-sn-glycerol + acetate + H(+). The catalysed reaction is 1,2-di-(9Z-octadecenoyl)-sn-glycerol + H2O = (9Z-octadecenoyl)-glycerol + (9Z)-octadecenoate + H(+). The enzyme catalyses 1,3-di-(9Z-octadecenoyl)-glycerol + H2O = 1-(9Z-octadecenoyl)-glycerol + (9Z)-octadecenoate + H(+). It catalyses the reaction 1,2-di-(9Z-octadecenoyl)-glycerol + H2O = 2-(9Z-octadecenoyl)-glycerol + (9Z)-octadecenoate + H(+). Its pathway is glycerolipid metabolism; triacylglycerol degradation. Its function is as follows. Lipase with broad substrate specificity, catalyzing the hydrolysis of triacylglycerols (TAGs), diacylglycerols (DAGs), monoacylglycerols (MAGs), cholesteryl esters and retinyl esters. Shows a preferential hydrolysis of DAGs over TAGs and MAGs. Preferentially hydrolyzes fatty acid (FA) esters at the sn-3 position of the glycerol backbone in DAGs and FA esters at the sn-1 and sn-2 positions of the glycerol backbone in TAGs. Catalyzes the hydrolysis of 2-arachidonoylglycerol, an endocannabinoid and of 2-acetyl monoalkylglycerol ether, the penultimate precursor of the pathway for de novo synthesis of platelet-activating factor. In adipose tissue and heart, it primarily hydrolyzes stored triglycerides to free fatty acids, while in steroidogenic tissues, it principally converts cholesteryl esters to free cholesterol for steroid hormone production. The chain is Hormone-sensitive lipase (LIPE) from Ictidomys tridecemlineatus (Thirteen-lined ground squirrel).